We begin with the raw amino-acid sequence, 1581 residues long: Ankyrin repeat domain-containing protein 26 (1581 aa).

Positions 1-22 (MKKIFGFRSKGPSPLGPSARPR) are disordered. Ser13 is modified (phosphoserine). ANK repeat units follow at residues 46–76 (KDMG…GVND), 80–109 (KDRT…EIDA), 113–142 (ESST…DPNV), 146–175 (SGNT…NIEA), and 179–208 (DDLT…SIHA). 4 disordered regions span residues 225–270 (RLQR…FDNK), 299–343 (LDNG…PVEG), 361–381 (SASQ…WHKS), and 488–652 (VLNK…QTAA). A compositionally biased stretch (polar residues) spans 229 to 250 (SENSNPVDNGSEDGSLTRSYNT). Phosphoserine is present on residues Ser239 and Ser260. The segment covering 308–319 (SDSPSESEDAIE) has biased composition (acidic residues). Residues 327–337 (RVQTLSPSRQS) show a composition bias toward polar residues. Over residues 367-381 (PNHDNLTRADGWHKS) the composition is skewed to basic and acidic residues. Residues 491–504 (KTETVGMTDAQTFK) show a composition bias toward polar residues. Basic and acidic residues-rich tracts occupy residues 505-516 (SEPESVSREEQT), 524-538 (SQQK…KNNE), and 585-601 (KEAK…REPA). Ser511 carries the post-translational modification Phosphoserine. Coiled-coil stretches lie at residues 715 to 845 (RSHC…NARM), 876 to 1345 (HEKE…MVEH), 1396 to 1470 (RSQM…RSLL), and 1521 to 1550 (LTKM…FCRV).

As to quaternary structure, interacts with TRIO. Interacts with GPS2. Interacts with CCDC85B. Interacts with HMMR. Widely expressed. Expressed in the arcuate and ventromedial nuclei within the hypothalamus and in the ependyma and the circumventricular organs (at protein level).

The protein resides in the cytoplasm. Its subcellular location is the cytosol. Functionally, acts as a regulator of adipogenesis. Involved in the regulation of the feeding behavior. The protein is Ankyrin repeat domain-containing protein 26 (Ankrd26) of Mus musculus (Mouse).